The chain runs to 115 residues: NADH-ubiquinone oxidoreductase chain 3 (115 aa).

The next 3 membrane-spanning stretches (helical) occupy residues 3–23 (LLLTLLTNTTLALLLVFIAFW), 55–75 (FFLVAITFLLFDLEIALLLPL), and 84–104 (LNTMLTMALFLISLLAASLAY).

The protein belongs to the complex I subunit 3 family. As to quaternary structure, core subunit of respiratory chain NADH dehydrogenase (Complex I) which is composed of 45 different subunits. Interacts with TMEM186. Interacts with TMEM242.

It is found in the mitochondrion inner membrane. The catalysed reaction is a ubiquinone + NADH + 5 H(+)(in) = a ubiquinol + NAD(+) + 4 H(+)(out). Its function is as follows. Core subunit of the mitochondrial membrane respiratory chain NADH dehydrogenase (Complex I) which catalyzes electron transfer from NADH through the respiratory chain, using ubiquinone as an electron acceptor. Essential for the catalytic activity of complex I. The sequence is that of NADH-ubiquinone oxidoreductase chain 3 from Balaenoptera musculus (Blue whale).